We begin with the raw amino-acid sequence, 248 residues long: Triosephosphate isomerase (248 aa).

The D-glyceraldehyde 3-phosphate site is built by N10 and K12. H95 acts as the Electrophile in catalysis. E165 functions as the Proton acceptor in the catalytic mechanism. D-glyceraldehyde 3-phosphate is bound by residues G171, L230, and 232-233 (GN).

The protein belongs to the triosephosphate isomerase family. Homodimer.

The enzyme catalyses D-glyceraldehyde 3-phosphate = dihydroxyacetone phosphate. The protein operates within carbohydrate biosynthesis; gluconeogenesis. It participates in carbohydrate degradation; glycolysis; D-glyceraldehyde 3-phosphate from glycerone phosphate: step 1/1. In terms of biological role, catalyzes the interconversion of glyceraldehyde 3-phosphate and dihydroxyacetone phosphate in the glycolytic and gluconeogenic pathways. The chain is Triosephosphate isomerase from Plasmodium falciparum (isolate 3D7).